A 101-amino-acid polypeptide reads, in one-letter code: MTGSTIAPTTDYRNTTATGLKSALNLPQVHAFVNDWASLGMWWFSIALMFVCLIIMWLICCLKRRRARPPIYRPIIVLNPHNEKIHRLDGLKPCSLLLQYD.

N14 is a glycosylation site (N-linked (GlcNAc...) asparagine; by host). Residues 41–62 (MWWFSIALMFVCLIIMWLICCL) form a helical membrane-spanning segment.

Belongs to the adenoviridae E3A-1 family. N-glycosylated and probably also O-glycosylated.

Its subcellular location is the host nucleus membrane. The chain is Early E3A 11.6 kDa glycoprotein from Human adenovirus C serotype 6 (HAdV-6).